The sequence spans 223 residues: Phosphoribosylformylglycinamidine synthase subunit PurQ (223 aa).

The 222-residue stretch at 2–223 (KFAVLKFPGS…MVNSWREQNV (222 aa)) folds into the Glutamine amidotransferase type-1 domain. Cysteine 85 serves as the catalytic Nucleophile. Catalysis depends on residues histidine 193 and glutamate 195.

Part of the FGAM synthase complex composed of 1 PurL, 1 PurQ and 2 PurS subunits.

It is found in the cytoplasm. It carries out the reaction N(2)-formyl-N(1)-(5-phospho-beta-D-ribosyl)glycinamide + L-glutamine + ATP + H2O = 2-formamido-N(1)-(5-O-phospho-beta-D-ribosyl)acetamidine + L-glutamate + ADP + phosphate + H(+). The catalysed reaction is L-glutamine + H2O = L-glutamate + NH4(+). Its pathway is purine metabolism; IMP biosynthesis via de novo pathway; 5-amino-1-(5-phospho-D-ribosyl)imidazole from N(2)-formyl-N(1)-(5-phospho-D-ribosyl)glycinamide: step 1/2. Its function is as follows. Part of the phosphoribosylformylglycinamidine synthase complex involved in the purines biosynthetic pathway. Catalyzes the ATP-dependent conversion of formylglycinamide ribonucleotide (FGAR) and glutamine to yield formylglycinamidine ribonucleotide (FGAM) and glutamate. The FGAM synthase complex is composed of three subunits. PurQ produces an ammonia molecule by converting glutamine to glutamate. PurL transfers the ammonia molecule to FGAR to form FGAM in an ATP-dependent manner. PurS interacts with PurQ and PurL and is thought to assist in the transfer of the ammonia molecule from PurQ to PurL. This is Phosphoribosylformylglycinamidine synthase subunit PurQ from Staphylococcus saprophyticus subsp. saprophyticus (strain ATCC 15305 / DSM 20229 / NCIMB 8711 / NCTC 7292 / S-41).